Here is a 202-residue protein sequence, read N- to C-terminus: Adapter protein MecA 2 (202 aa).

It belongs to the MecA family. In terms of assembly, homodimer.

In terms of biological role, enables the recognition and targeting of unfolded and aggregated proteins to the ClpC protease or to other proteins involved in proteolysis. Acts negatively in the development of competence by binding ComK and recruiting it to the ClpCP protease. When overexpressed, inhibits sporulation. Also involved in Spx degradation by ClpC. The protein is Adapter protein MecA 2 (mecA2) of Bacillus anthracis.